Here is a 64-residue protein sequence, read N- to C-terminus: Large ribosomal subunit protein bL35c (64 aa).

It belongs to the bacterial ribosomal protein bL35 family.

Its subcellular location is the plastid. The protein localises to the chloroplast. The protein is Large ribosomal subunit protein bL35c of Cyanidium caldarium (Red alga).